Reading from the N-terminus, the 225-residue chain is NAD(P)H-quinone oxidoreductase subunit K, chloroplastic (225 aa).

Residues cysteine 43, cysteine 44, cysteine 108, and cysteine 139 each coordinate [4Fe-4S] cluster.

The protein belongs to the complex I 20 kDa subunit family. NDH is composed of at least 16 different subunits, 5 of which are encoded in the nucleus. Requires [4Fe-4S] cluster as cofactor.

The protein localises to the plastid. It is found in the chloroplast thylakoid membrane. The enzyme catalyses a plastoquinone + NADH + (n+1) H(+)(in) = a plastoquinol + NAD(+) + n H(+)(out). It carries out the reaction a plastoquinone + NADPH + (n+1) H(+)(in) = a plastoquinol + NADP(+) + n H(+)(out). NDH shuttles electrons from NAD(P)H:plastoquinone, via FMN and iron-sulfur (Fe-S) centers, to quinones in the photosynthetic chain and possibly in a chloroplast respiratory chain. The immediate electron acceptor for the enzyme in this species is believed to be plastoquinone. Couples the redox reaction to proton translocation, and thus conserves the redox energy in a proton gradient. The polypeptide is NAD(P)H-quinone oxidoreductase subunit K, chloroplastic (Brachypodium distachyon (Purple false brome)).